A 236-amino-acid chain; its full sequence is Auxin-responsive protein IAA16 (236 aa).

The EAR-like (transcriptional repression) motif lies at 9 to 13 (LRLGL). The tract at residues 82 to 110 (KNVMSGQKPTTGDATEGNDKTSGSSGATS) is disordered. Positions 85–94 (MSGQKPTTGD) are enriched in polar residues. The region spanning 118 to 218 (VAYVKVSMDG…SCKRIRIMKG (101 aa)) is the PB1 domain.

This sequence belongs to the Aux/IAA family. In terms of assembly, homodimers and heterodimers.

The protein localises to the nucleus. Aux/IAA proteins are short-lived transcriptional factors that function as repressors of early auxin response genes at low auxin concentrations. Repression is thought to result from the interaction with auxin response factors (ARFs), proteins that bind to the auxin-responsive promoter element (AuxRE). Formation of heterodimers with ARF proteins may alter their ability to modulate early auxin response genes expression. This Arabidopsis thaliana (Mouse-ear cress) protein is Auxin-responsive protein IAA16 (IAA16).